A 308-amino-acid polypeptide reads, in one-letter code: Oligopeptide transport ATP-binding protein AmiF (308 aa).

Positions Val-6–Leu-251 constitute an ABC transporter domain. Position 42-49 (Gly-42–Thr-49) interacts with ATP.

This sequence belongs to the ABC transporter superfamily.

Its subcellular location is the cell membrane. Functionally, part of the binding-protein-dependent transport system for oligopeptides. Probably responsible for energy coupling to the transport system. The polypeptide is Oligopeptide transport ATP-binding protein AmiF (amiF) (Streptococcus pneumoniae serotype 4 (strain ATCC BAA-334 / TIGR4)).